The sequence spans 707 residues: Polyribonucleotide nucleotidyltransferase (707 aa).

Residues D487 and D493 each coordinate Mg(2+). The KH domain occupies 554-613 (PKILTMNINPDKIRDVIGPSGKQINKIIEDTGVKIDIEQDGTIFISSTDESSNQKAKKII). Residues 623–691 (GQLYLGKVKR…KQGRVNLSRK (69 aa)) form the S1 motif domain.

It belongs to the polyribonucleotide nucleotidyltransferase family. It depends on Mg(2+) as a cofactor.

It is found in the cytoplasm. It catalyses the reaction RNA(n+1) + phosphate = RNA(n) + a ribonucleoside 5'-diphosphate. In terms of biological role, involved in mRNA degradation. Catalyzes the phosphorolysis of single-stranded polyribonucleotides processively in the 3'- to 5'-direction. The protein is Polyribonucleotide nucleotidyltransferase of Bacillus velezensis (strain DSM 23117 / BGSC 10A6 / LMG 26770 / FZB42) (Bacillus amyloliquefaciens subsp. plantarum).